We begin with the raw amino-acid sequence, 1167 residues long: mRNA 3'-end-processing protein rna-14 (1167 aa).

The segment at Met1–Pro245 is disordered. Composition is skewed to acidic residues over residues Glu16 to Gly26 and Asn70 to Asp79. Residues Thr102–Ala111 show a composition bias toward low complexity. Over residues Asp124–Glu137 the composition is skewed to acidic residues. 2 stretches are compositionally biased toward low complexity: residues Pro138–Pro150 and Gly159–Ala191. The span at Thr192 to Gly218 shows a compositional bias: polar residues. Positions Ala219–Pro245 are enriched in low complexity. HAT repeat units follow at residues Asn277–Ser309, Asn311–Arg342, Gln352–Phe387, Gln401–Gly434, Thr471–Ser504, and Leu518–Asp550. Residues Gln882 to Asp893 show a composition bias toward polar residues. Disordered regions lie at residues Gln882–Gly980 and Ala1075–Tyr1167. Positions Ser908–Ala922 are enriched in low complexity. Basic and acidic residues predominate over residues Arg924–Phe946. Residues Gly969 to Ala979 are compositionally biased toward gly residues. The span at Ser1079–Pro1090 shows a compositional bias: low complexity. Pro residues predominate over residues Glu1121 to Ala1134. Over residues Gln1135–Gln1151 the composition is skewed to low complexity.

Its subcellular location is the nucleus. The protein resides in the cytoplasm. Component of the cleavage factor IA (CFIA) complex, which is involved in the endonucleolytic cleavage during polyadenylation-dependent pre-mRNA 3'-end formation. This chain is mRNA 3'-end-processing protein rna-14 (rna-14), found in Neurospora crassa (strain ATCC 24698 / 74-OR23-1A / CBS 708.71 / DSM 1257 / FGSC 987).